Consider the following 809-residue polypeptide: Sucrose synthase 2 (809 aa).

The tract at residues 278–756 (MVFNVVILSP…GLQRIYERYT (479 aa)) is GT-B glycosyltransferase.

The protein belongs to the glycosyltransferase 1 family. Plant sucrose synthase subfamily.

It catalyses the reaction an NDP-alpha-D-glucose + D-fructose = a ribonucleoside 5'-diphosphate + sucrose + H(+). Sucrose-cleaving enzyme that provides UDP-glucose and fructose for various metabolic pathways. This is Sucrose synthase 2 (SUS2) from Pisum sativum (Garden pea).